Here is a 142-residue protein sequence, read N- to C-terminus: Hemoglobin subunit theta-1 (142 aa).

One can recognise a Globin domain in the interval 2–142; the sequence is ALAAADRATV…VISALASDCR (141 aa). The heme b site is built by His-59 and His-88.

Belongs to the globin family.

The protein is Hemoglobin subunit theta-1 (HBQ1) of Equus caballus (Horse).